The primary structure comprises 177 residues: Large ribosomal subunit protein uL6 (177 aa).

The protein belongs to the universal ribosomal protein uL6 family. As to quaternary structure, part of the 50S ribosomal subunit.

In terms of biological role, this protein binds to the 23S rRNA, and is important in its secondary structure. It is located near the subunit interface in the base of the L7/L12 stalk, and near the tRNA binding site of the peptidyltransferase center. The chain is Large ribosomal subunit protein uL6 from Psychrobacter arcticus (strain DSM 17307 / VKM B-2377 / 273-4).